The following is a 316-amino-acid chain: Transaldolase (316 aa).

Lysine 126 (schiff-base intermediate with substrate) is an active-site residue.

This sequence belongs to the transaldolase family. Type 1 subfamily. As to quaternary structure, homodimer.

The protein resides in the cytoplasm. It carries out the reaction D-sedoheptulose 7-phosphate + D-glyceraldehyde 3-phosphate = D-erythrose 4-phosphate + beta-D-fructose 6-phosphate. The protein operates within carbohydrate degradation; pentose phosphate pathway; D-glyceraldehyde 3-phosphate and beta-D-fructose 6-phosphate from D-ribose 5-phosphate and D-xylulose 5-phosphate (non-oxidative stage): step 2/3. Functionally, transaldolase is important for the balance of metabolites in the pentose-phosphate pathway. The protein is Transaldolase of Methylibium petroleiphilum (strain ATCC BAA-1232 / LMG 22953 / PM1).